The sequence spans 228 residues: UPF0758 protein H16_A3033 (228 aa).

The 123-residue stretch at 102–224 (GFDGPAAVRN…IRSLADCCDR (123 aa)) folds into the MPN domain. Zn(2+) is bound by residues His173, His175, and Asp186. The JAMM motif signature appears at 173–186 (HNHPRGTTAPSQSD).

This sequence belongs to the UPF0758 family.

The polypeptide is UPF0758 protein H16_A3033 (Cupriavidus necator (strain ATCC 17699 / DSM 428 / KCTC 22496 / NCIMB 10442 / H16 / Stanier 337) (Ralstonia eutropha)).